The following is a 191-amino-acid chain: DNA-directed RNA polymerase subunit Rpo3 (191 aa).

This sequence belongs to the archaeal Rpo3/eukaryotic RPB3 RNA polymerase subunit family. As to quaternary structure, part of the RNA polymerase complex. Interacts with Rpo12. Forms an Rpo3-Rpo10-Rpo11-Rpo12 complex upon coexpression.

The protein localises to the cytoplasm. The catalysed reaction is RNA(n) + a ribonucleoside 5'-triphosphate = RNA(n+1) + diphosphate. In terms of biological role, DNA-dependent RNA polymerase (RNAP) catalyzes the transcription of DNA into RNA using the four ribonucleoside triphosphates as substrates. The polypeptide is DNA-directed RNA polymerase subunit Rpo3 (Methanocaldococcus jannaschii (strain ATCC 43067 / DSM 2661 / JAL-1 / JCM 10045 / NBRC 100440) (Methanococcus jannaschii)).